A 357-amino-acid chain; its full sequence is Fructose-1,6-bisphosphatase class 1 3 (357 aa).

4 residues coordinate Mg(2+): Glu-94, Asp-116, Leu-118, and Asp-119. Substrate contacts are provided by residues 119 to 122 and Asn-211; that span reads DGSS. Residue Glu-283 coordinates Mg(2+).

Belongs to the FBPase class 1 family. As to quaternary structure, homotetramer. Mg(2+) serves as cofactor.

It localises to the cytoplasm. It carries out the reaction beta-D-fructose 1,6-bisphosphate + H2O = beta-D-fructose 6-phosphate + phosphate. Its pathway is carbohydrate biosynthesis; Calvin cycle. This Methylibium petroleiphilum (strain ATCC BAA-1232 / LMG 22953 / PM1) protein is Fructose-1,6-bisphosphatase class 1 3.